The sequence spans 300 residues: uncharacterized protein (300 aa).

Catalysis depends on serine 49, which acts as the Charge relay system. Tyrosine 137 serves as the catalytic Proton donor. Residue lysine 165 is the Schiff-base intermediate with substrate of the active site.

The protein belongs to the DapA family. As to quaternary structure, homotetramer.

Its subcellular location is the cytoplasm. Upon expression in E.coli complements a dapA deletion mutation, but this may not be its physiological function. This is an uncharacterized protein from Rhizobium meliloti (Ensifer meliloti).